Reading from the N-terminus, the 400-residue chain is Acetate kinase (400 aa).

Mg(2+) is bound at residue N10. Position 17 (K17) interacts with ATP. R91 contributes to the substrate binding site. D150 serves as the catalytic Proton donor/acceptor. ATP contacts are provided by residues 210-214 (HLGNG), 285-287 (DCR), and 333-337 (GIGEN). E387 is a Mg(2+) binding site.

The protein belongs to the acetokinase family. In terms of assembly, homodimer. The cofactor is Mg(2+). It depends on Mn(2+) as a cofactor.

The protein resides in the cytoplasm. It catalyses the reaction acetate + ATP = acetyl phosphate + ADP. It participates in metabolic intermediate biosynthesis; acetyl-CoA biosynthesis; acetyl-CoA from acetate: step 1/2. In terms of biological role, catalyzes the formation of acetyl phosphate from acetate and ATP. Can also catalyze the reverse reaction. The protein is Acetate kinase of Pectobacterium carotovorum subsp. carotovorum (strain PC1).